Here is a 973-residue protein sequence, read N- to C-terminus: Isoleucine--tRNA ligase, mitochondrial (973 aa).

Residues 87–97 carry the 'HIGH' region motif; sequence PFANGRLHIGH. Positions 625–629 match the 'KMSKS' region motif; the sequence is KQSKS. Lysine 628 is an ATP binding site.

Belongs to the class-I aminoacyl-tRNA synthetase family.

Its subcellular location is the cytoplasm. It is found in the mitochondrion matrix. It carries out the reaction tRNA(Ile) + L-isoleucine + ATP = L-isoleucyl-tRNA(Ile) + AMP + diphosphate. The protein is Isoleucine--tRNA ligase, mitochondrial (ism1) of Schizosaccharomyces pombe (strain 972 / ATCC 24843) (Fission yeast).